The sequence spans 85 residues: Beta-insect depressant toxin Lqh-dprIT3a (85 aa).

The first 21 residues, 1-21, serve as a signal peptide directing secretion; it reads MKLLLLLTISASMLIEGLVNA. Positions 22-82 constitute an LCN-type CS-alpha/beta domain; that stretch reads DGYIRGGDGC…EWDYETNTCG (61 aa). Disulfide bonds link Cys31-Cys81, Cys35-Cys56, Cys42-Cys63, and Cys46-Cys65. Gly82 carries the post-translational modification Glycine amide.

Belongs to the long (4 C-C) scorpion toxin superfamily. Sodium channel inhibitor family. Beta subfamily. In terms of tissue distribution, expressed by the venom gland.

It localises to the secreted. Depressant insect beta-toxins cause a transient contraction paralysis followed by a slow flaccid paralysis. They bind voltage-independently at site-4 of sodium channels (Nav) and block action potentials, primarily by depolarizing the axonal membrane and suppressing the sodium current. This depressant toxin is active only on insects. It is found in a relatively small amount in the venom, and its activity on insects is 10-fold higher compared to other known depressant toxins. The polypeptide is Beta-insect depressant toxin Lqh-dprIT3a (Leiurus hebraeus (Hebrew deathstalker scorpion)).